A 429-amino-acid chain; its full sequence is Glutamyl-tRNA reductase (429 aa).

Residues Thr-49–Arg-52, Ser-107, Glu-112–Gln-114, and Gln-118 each bind substrate. The active-site Nucleophile is the Cys-50. NADP(+) is bound at residue Gly-187–Ile-192.

This sequence belongs to the glutamyl-tRNA reductase family. Homodimer.

The catalysed reaction is (S)-4-amino-5-oxopentanoate + tRNA(Glu) + NADP(+) = L-glutamyl-tRNA(Glu) + NADPH + H(+). Its pathway is porphyrin-containing compound metabolism; protoporphyrin-IX biosynthesis; 5-aminolevulinate from L-glutamyl-tRNA(Glu): step 1/2. Its function is as follows. Catalyzes the NADPH-dependent reduction of glutamyl-tRNA(Glu) to glutamate 1-semialdehyde (GSA). In Marinobacter nauticus (strain ATCC 700491 / DSM 11845 / VT8) (Marinobacter aquaeolei), this protein is Glutamyl-tRNA reductase.